Here is a 509-residue protein sequence, read N- to C-terminus: Cobyric acid synthase (509 aa).

One can recognise a GATase cobBQ-type domain in the interval 262 to 459 (EIKVGIIKLP…IHGIFENDIW (198 aa)). Cys-343 functions as the Nucleophile in the catalytic mechanism. His-451 is a catalytic residue.

This sequence belongs to the CobB/CobQ family. CobQ subfamily.

It participates in cofactor biosynthesis; adenosylcobalamin biosynthesis. Catalyzes amidations at positions B, D, E, and G on adenosylcobyrinic A,C-diamide. NH(2) groups are provided by glutamine, and one molecule of ATP is hydrogenolyzed for each amidation. This chain is Cobyric acid synthase, found in Prochlorococcus marinus (strain MIT 9312).